The chain runs to 363 residues: Cytoplasmic tRNA 2-thiolation protein 1 (363 aa).

The disordered stretch occupies residues Asp337–Phe363.

Belongs to the TtcA family. CTU1/NCS6/ATPBD3 subfamily.

It localises to the cytoplasm. Its pathway is tRNA modification; 5-methoxycarbonylmethyl-2-thiouridine-tRNA biosynthesis. In terms of biological role, plays a central role in 2-thiolation of mcm(5)S(2)U at tRNA wobble positions of tRNA(Lys), tRNA(Glu) and tRNA(Gln). Directly binds tRNAs and probably acts by catalyzing adenylation of tRNAs, an intermediate required for 2-thiolation. It is unclear whether it acts as a sulfurtransferase that transfers sulfur from thiocarboxylated URM1 onto the uridine of tRNAs at wobble position. In Oryza sativa subsp. japonica (Rice), this protein is Cytoplasmic tRNA 2-thiolation protein 1.